The primary structure comprises 135 residues: Small ribosomal subunit protein uS9 (135 aa).

This sequence belongs to the universal ribosomal protein uS9 family.

This Archaeoglobus fulgidus (strain ATCC 49558 / DSM 4304 / JCM 9628 / NBRC 100126 / VC-16) protein is Small ribosomal subunit protein uS9 (rps9).